The sequence spans 130 residues: Protein BLT4 (130 aa).

An N-terminal signal peptide occupies residues 1 to 25 (MARTAATKLALVPLVAAMLLVAADA). Residues 80–130 (VPARTTPAGPQASPPGAASASPTRSAPVSTALRSTDRTRAPHISSDRRLVG) are disordered. The span at 84–110 (TTPAGPQASPPGAASASPTRSAPVSTA) shows a compositional bias: low complexity. Residues 113 to 130 (STDRTRAPHISSDRRLVG) are compositionally biased toward basic and acidic residues.

It belongs to the plant LTP family. In terms of tissue distribution, shoot meristem.

Functionally, possible dehydrative stress responsive protein. Not shown to have lipid transfer activity. This Hordeum vulgare (Barley) protein is Protein BLT4 (BLT4).